The sequence spans 878 residues: Microtubule-associated protein homolog maph-1.1 (878 aa).

2 disordered regions span residues 224 to 425 and 456 to 518; these read ALSD…AQAT and EIPP…PVVP. Low complexity-rich tracts occupy residues 241-268, 278-293, 310-321, and 328-339; these read PSARPATTTGTATRPTRPAVPAASAPRA, SRPTTTRNAAPAPRTA, APTRAPVPARSA, and APAKPAANTAKA. Composition is skewed to basic and acidic residues over residues 416-425 and 480-496; these read PPRHEVAQAT and EEDKIPEPVDAFKKPDP.

The protein belongs to the MAP1A/MAP1B/MAP1S family. In terms of assembly, interacts with dlg-1.

Its subcellular location is the cell projection. It is found in the dendrite. The protein resides in the perikaryon. The protein localises to the axon. It localises to the cytoplasm. Its subcellular location is the cytoskeleton. The chain is Microtubule-associated protein homolog maph-1.1 from Caenorhabditis elegans.